The sequence spans 65 residues: MKMSILFLFALIASLACLQLTFAAPAASPFANPGASPEAAPLADPLADPFMPISGMLMSGMLGKK.

The signal sequence occupies residues Met-1–Ala-23. AXPX repeat units follow at residues Ala-23–Ala-26, Ala-27–Phe-30, Ala-31–Gly-34, Ala-35–Glu-38, Ala-39–Leu-42, Ala-43–Leu-46, and Ala-47–Phe-50. Positions Ala-24–Pro-49 are excised as a propeptide. Position 62 is a leucine amide (Leu-62).

The protein belongs to the MCD family. Mastoparan subfamily. As to expression, expressed by the venom gland.

It is found in the secreted. Functionally, antimicrobial peptide. Shows activity against both Gram-positive and -negative bacteria, as well against fungi. Also promotes important mast cell degranulation. Shows little hemolytic activity on rabbit and human erythrocytes. Its mast cell degranulation activity may be related to the activation of G-protein coupled receptors in mast cells as well as interaction with other proteins located in cell endosomal membranes in the mast cells. The chain is VESP-VB2 from Vespa bicolor (Black shield wasp).